We begin with the raw amino-acid sequence, 476 residues long: Transcriptional regulator claA (476 aa).

Positions 25–52 (CDTCLKAKIKCSQAKPTCARCLQQGRQC) form a DNA-binding region, zn(2)-C6 fungal-type. A disordered region spans residues 63–92 (PSTKNLPLDQLQQPKGRTAGGTARRSLSRR). A compositionally biased stretch (polar residues) spans 64-77 (STKNLPLDQLQQPK).

It localises to the nucleus. Transcriptional regulator; part of the cla gene cluster that produces clavatol and ortho-quinone methide. The clavatol biosynthesis cluster cla and the terrestric acid cluster tra are both involved in the production of peniphenones and penilactones. The protein is Transcriptional regulator claA of Penicillium crustosum (Blue mold fungus).